The sequence spans 81 residues: Cytotoxin 2b (81 aa).

The signal sequence occupies residues 1–21 (MKTLLLTLVVVTTVCLDLGYT). Disulfide bonds link Cys-24–Cys-42, Cys-35–Cys-59, Cys-63–Cys-74, and Cys-75–Cys-80.

Belongs to the three-finger toxin family. Short-chain subfamily. Type IA cytotoxin sub-subfamily. Monomer in solution; Homodimer and oligomer in the presence of negatively charged lipids forming a pore with a size ranging between 20 and 30 Angstroms. In terms of tissue distribution, expressed by the venom gland.

Its subcellular location is the secreted. The protein localises to the target cell membrane. Functionally, shows cytolytic activity on many different cells by forming pore in lipid membranes. In vivo, increases heart rate or kills the animal by cardiac arrest. In addition, it binds to heparin with high affinity, interacts with Kv channel-interacting protein 1 (KCNIP1) in a calcium-independent manner, and binds to integrin alpha-V/beta-3 (ITGAV/ITGB3) with moderate affinity. This chain is Cytotoxin 2b, found in Naja sputatrix (Malayan spitting cobra).